The primary structure comprises 426 residues: MESLTLQPISKINGQINLPGSKSVSNRALLLAALASGTTKLTNLLDSDDIRHMLNALKALGVEYKLSANKTECEVTGLGRAFEPNEALELFLGNAGTAMRPLAAALCLGQGEFVLTGEPRMKERPIGHLVTALKAAGADVEYLENENYPPLKIKGTGLHGGTVEIDGSISSQFLTAFLMAAPLSTQETTIKIVGDLVSKPYIDITLDIMATFGVKIENQNYQTFVVPANQTYVAPGDFLVEGDASSASYFLAAAAIKGGEVKVTGIGKKSIQGDVQFADALAAMGTEIEWGDDYVIARKGELNAIDMDFNHIPDAAMTIATAALFAKGTTSIRNVYNWRVKETDRLAAMATELRKVGAVVEEGEDYITITPPASLQHASIDTYDDHRMAMCFSLVALSDTPVTINDPGCTSKTFPDYFDKLKELSC.

3-phosphoshikimate-binding residues include K22, S23, and R27. Residue K22 participates in phosphoenolpyruvate binding. The phosphoenolpyruvate site is built by G96 and R124. Residues S170, S171, Q172, S198, D314, N337, and K341 each contribute to the 3-phosphoshikimate site. Position 172 (Q172) interacts with phosphoenolpyruvate. D314 (proton acceptor) is an active-site residue. Residues R345, R387, and K412 each coordinate phosphoenolpyruvate.

The protein belongs to the EPSP synthase family. In terms of assembly, monomer.

It is found in the cytoplasm. It carries out the reaction 3-phosphoshikimate + phosphoenolpyruvate = 5-O-(1-carboxyvinyl)-3-phosphoshikimate + phosphate. It functions in the pathway metabolic intermediate biosynthesis; chorismate biosynthesis; chorismate from D-erythrose 4-phosphate and phosphoenolpyruvate: step 6/7. Catalyzes the transfer of the enolpyruvyl moiety of phosphoenolpyruvate (PEP) to the 5-hydroxyl of shikimate-3-phosphate (S3P) to produce enolpyruvyl shikimate-3-phosphate and inorganic phosphate. The chain is 3-phosphoshikimate 1-carboxyvinyltransferase from Aliivibrio fischeri (strain ATCC 700601 / ES114) (Vibrio fischeri).